A 147-amino-acid polypeptide reads, in one-letter code: Phospholipase A2 SSD387 (147 aa).

A signal peptide spans 1-19 (MSPKFLLFSIIAVWSCAAA). Residues 20-28 (IEALFIQPR) constitute a propeptide that is removed on maturation. 5 disulfides stabilise this stretch: Cys-55/Cys-71, Cys-70/Cys-130, Cys-77/Cys-123, Cys-86/Cys-116, and Cys-109/Cys-121. Ca(2+) contacts are provided by Gly-56 and Gly-58. The active site involves His-74. Asp-75 serves as a coordination point for Ca(2+). Residue Asp-124 is part of the active site.

The cofactor is Ca(2+). Expressed by the venom gland.

Its subcellular location is the secreted. The enzyme catalyses a 1,2-diacyl-sn-glycero-3-phosphocholine + H2O = a 1-acyl-sn-glycero-3-phosphocholine + a fatty acid + H(+). Functionally, PLA2 catalyzes the calcium-dependent hydrolysis of the 2-acyl groups in 3-sn-phosphoglycerides. In Scolopendra dehaani (Thai centipede), this protein is Phospholipase A2 SSD387.